We begin with the raw amino-acid sequence, 125 residues long: Major intrinsically disordered NOTCH2-binding receptor 1-like (125 aa).

N37 is a glycosylation site (N-linked (GlcNAc...) asparagine). A helical transmembrane segment spans residues 100–120 (FAFITLFVCAVVIIITVPIVV).

It belongs to the MINAR family. Interacts with NOTCH2. As to expression, highly expressed in the auditory hair cells.

The protein localises to the lysosome membrane. Its subcellular location is the endoplasmic reticulum membrane. Its function is as follows. Binds cholesterol and may regulate the distribution and homeostasis of cholesterol in hair cells. May play a role in angiogenesis. The sequence is that of Major intrinsically disordered NOTCH2-binding receptor 1-like from Danio rerio (Zebrafish).